The sequence spans 103 residues: Large ribosomal subunit protein uL23 (103 aa).

It belongs to the universal ribosomal protein uL23 family. In terms of assembly, part of the 50S ribosomal subunit. Contacts protein L29, and trigger factor when it is bound to the ribosome.

Functionally, one of the early assembly proteins it binds 23S rRNA. One of the proteins that surrounds the polypeptide exit tunnel on the outside of the ribosome. Forms the main docking site for trigger factor binding to the ribosome. This chain is Large ribosomal subunit protein uL23, found in Chlorobium phaeovibrioides (strain DSM 265 / 1930) (Prosthecochloris vibrioformis (strain DSM 265)).